The chain runs to 126 residues: Ribulose bisphosphate carboxylase small subunit, chloroplastic 1 (126 aa).

It belongs to the RuBisCO small chain family. In terms of assembly, heterohexadecamer of 8 large and 8 small subunits.

The protein resides in the plastid. Its subcellular location is the chloroplast. RuBisCO catalyzes two reactions: the carboxylation of D-ribulose 1,5-bisphosphate, the primary event in carbon dioxide fixation, as well as the oxidative fragmentation of the pentose substrate. Both reactions occur simultaneously and in competition at the same active site. Although the small subunit is not catalytic it is essential for maximal activity. The protein is Ribulose bisphosphate carboxylase small subunit, chloroplastic 1 of Acetabularia peniculus (Green alga).